Consider the following 263-residue polypeptide: Probable ABC transporter permease protein ycf63 (263 aa).

Helical transmembrane passes span 43-63 (IVGP…SMVF), 70-89 (EFLY…IAFT), 150-170 (ILSI…AFVM), 188-208 (ISDF…IGFI), and 230-250 (SVVT…YFMF).

It belongs to the MlaE permease family.

It is found in the plastid. The protein localises to the chloroplast membrane. In terms of biological role, could be part of an ABC transporter complex. The polypeptide is Probable ABC transporter permease protein ycf63 (ycf63) (Pyropia yezoensis (Susabi-nori)).